Reading from the N-terminus, the 124-residue chain is UPF0102 protein Msil_0293 (124 aa).

It belongs to the UPF0102 family.

The protein is UPF0102 protein Msil_0293 of Methylocella silvestris (strain DSM 15510 / CIP 108128 / LMG 27833 / NCIMB 13906 / BL2).